The sequence spans 396 residues: Probable sugar efflux transporter (396 aa).

12 helical membrane passes run 15–35 (VVTL…PVGL), 50–70 (VGIM…PFML), 81–101 (LICL…AWNF), 103–123 (VLVI…SITA), 136–156 (AQAL…GLPI), 169–189 (TFFA…KLLP), 209–229 (PALM…YTAY), 246–266 (FATV…LVFG), 275–295 (SLVS…LPAA), 301–321 (LAIL…GMQV), 333–353 (VAMA…ALVG), and 364–384 (AIGY…VLIF).

This sequence belongs to the major facilitator superfamily. SotB (TC 2.A.1.2) family.

Its subcellular location is the cell inner membrane. Functionally, involved in the efflux of sugars. The physiological role may be the reduction of the intracellular concentration of toxic sugars or sugar metabolites. This Salmonella agona (strain SL483) protein is Probable sugar efflux transporter.